A 348-amino-acid polypeptide reads, in one-letter code: Anthranilate phosphoribosyltransferase (348 aa).

5-phospho-alpha-D-ribose 1-diphosphate is bound by residues G93, 96 to 97, T101, 103 to 106, 121 to 129, and S133; these read GD, NVST, and KHGNRAVSS. Anthranilate is bound at residue G93. Residue S105 coordinates Mg(2+). Position 124 (N124) interacts with anthranilate. R179 serves as a coordination point for anthranilate. 2 residues coordinate Mg(2+): D238 and E239.

The protein belongs to the anthranilate phosphoribosyltransferase family. As to quaternary structure, homodimer. Mg(2+) serves as cofactor.

It catalyses the reaction N-(5-phospho-beta-D-ribosyl)anthranilate + diphosphate = 5-phospho-alpha-D-ribose 1-diphosphate + anthranilate. It functions in the pathway amino-acid biosynthesis; L-tryptophan biosynthesis; L-tryptophan from chorismate: step 2/5. Functionally, catalyzes the transfer of the phosphoribosyl group of 5-phosphorylribose-1-pyrophosphate (PRPP) to anthranilate to yield N-(5'-phosphoribosyl)-anthranilate (PRA). The polypeptide is Anthranilate phosphoribosyltransferase (Desulfotalea psychrophila (strain LSv54 / DSM 12343)).